Consider the following 502-residue polypeptide: Beta-glucosidase 7 (502 aa).

The first 22 residues, 1–22 (MKPFSQFFVFVVTVSATSYIDA), serve as a signal peptide directing secretion. Residues Gln-42, His-140, and 185-186 (NE) each bind a beta-D-glucoside. Glu-186 acts as the Proton donor in catalysis. Asn-208 is a glycosylation site (N-linked (GlcNAc...) asparagine). Tyr-325 contacts a beta-D-glucoside. Asn-359 carries N-linked (GlcNAc...) asparagine glycosylation. Glu-392 contacts a beta-D-glucoside. Catalysis depends on Glu-392, which acts as the Nucleophile. Asn-425 carries an N-linked (GlcNAc...) asparagine glycan. The a beta-D-glucoside site is built by Trp-435 and Tyr-451. Asn-457 and Asn-479 each carry an N-linked (GlcNAc...) asparagine glycan.

The protein belongs to the glycosyl hydrolase 1 family.

The catalysed reaction is Hydrolysis of terminal, non-reducing beta-D-glucosyl residues with release of beta-D-glucose.. This is Beta-glucosidase 7 from Arabidopsis thaliana (Mouse-ear cress).